We begin with the raw amino-acid sequence, 470 residues long: MTEKEKKLWGGRFQENASSILERIGQSISFDHKLYKEDIQGSIAHARMLKQIGILNSEELSKIEIALAQIKTELEEGKFEFKSELEDIHMHIEFRLTELIGETGKKLHTARSRNDQVTQDVRLYILNQGKEILKSIINLRSSLYQKAKQSLDVIIPGYTHLQIAQPIRASQYLLSWFWALERDQEFFRFAFKASEELALGSGAMAGVNYPTDREFLKKELGLSKVSPNSMDGVSSRDHILEFLFACTQLMIHVSRICEDIILYSSQEFGILKLPDSLTTGSSIMPQKKNPDIAELIRGKSGRVIGNLNHLLVMLKGLPSTYNRDLQEDKLALFDSIETVQISLEGIREMIEGWIWIPERAEVSLKNGFATATDLADFLVNEKKIPFRTAHELVGTLVGVCVKQKKTLFDLPESDRVSISKYFVGKEYEDAVSLSLSADKKISYGGTSKKRQEEQLKIALDSLKEAERLFL.

Belongs to the lyase 1 family. Argininosuccinate lyase subfamily.

The protein localises to the cytoplasm. It carries out the reaction 2-(N(omega)-L-arginino)succinate = fumarate + L-arginine. Its pathway is amino-acid biosynthesis; L-arginine biosynthesis; L-arginine from L-ornithine and carbamoyl phosphate: step 3/3. This Leptospira interrogans serogroup Icterohaemorrhagiae serovar copenhageni (strain Fiocruz L1-130) protein is Argininosuccinate lyase.